We begin with the raw amino-acid sequence, 366 residues long: Autophagy-related protein 18b (366 aa).

3 WD repeats span residues 6–44, 178–218, and 223–265; these read SLPS…LCYE, AHRS…KSYS, and TYPS…NQRS.

This sequence belongs to the WD repeat PROPPIN family. In terms of assembly, component of the PI(3,5)P2 regulatory complex at least composed of ATG18, SAC/FIG4, FAB1 and VAC14. In terms of tissue distribution, expressed in roots, stems, flowers and leaves.

The protein resides in the preautophagosomal structure membrane. The protein localises to the vacuole membrane. In terms of biological role, the PI(3,5)P2 regulatory complex regulates both the synthesis and turnover of phosphatidylinositol 3,5-bisphosphate (PtdIns(3,5)P2). Required for autophagy. In Arabidopsis thaliana (Mouse-ear cress), this protein is Autophagy-related protein 18b (ATG18B).